The following is a 388-amino-acid chain: 4-hydroxy-3-methylbut-2-en-1-yl diphosphate synthase (flavodoxin) (388 aa).

[4Fe-4S] cluster-binding residues include Cys-281, Cys-284, Cys-316, and Glu-323.

It belongs to the IspG family. It depends on [4Fe-4S] cluster as a cofactor.

It carries out the reaction (2E)-4-hydroxy-3-methylbut-2-enyl diphosphate + oxidized [flavodoxin] + H2O + 2 H(+) = 2-C-methyl-D-erythritol 2,4-cyclic diphosphate + reduced [flavodoxin]. It functions in the pathway isoprenoid biosynthesis; isopentenyl diphosphate biosynthesis via DXP pathway; isopentenyl diphosphate from 1-deoxy-D-xylulose 5-phosphate: step 5/6. In terms of biological role, converts 2C-methyl-D-erythritol 2,4-cyclodiphosphate (ME-2,4cPP) into 1-hydroxy-2-methyl-2-(E)-butenyl 4-diphosphate. The sequence is that of 4-hydroxy-3-methylbut-2-en-1-yl diphosphate synthase (flavodoxin) from Paenarthrobacter aurescens (strain TC1).